The following is a 252-amino-acid chain: Ribosomal RNA small subunit methyltransferase J (252 aa).

Residues 104–105, 120–121, 156–157, and Asp-174 each bind S-adenosyl-L-methionine; these read RD, ER, and SS.

This sequence belongs to the methyltransferase superfamily. RsmJ family.

It is found in the cytoplasm. The enzyme catalyses guanosine(1516) in 16S rRNA + S-adenosyl-L-methionine = N(2)-methylguanosine(1516) in 16S rRNA + S-adenosyl-L-homocysteine + H(+). Specifically methylates the guanosine in position 1516 of 16S rRNA. The chain is Ribosomal RNA small subunit methyltransferase J from Yersinia enterocolitica serotype O:8 / biotype 1B (strain NCTC 13174 / 8081).